The sequence spans 447 residues: MANVIVIGAQWGDEGKGKITDLLSRSADVVVRYQGGVNAGHTIVVKGQTFKLHLIPSGILYPDTECMIGCGTVIDPQVLIKELDQLESLNISTKNLLISETAHVTMPYHRLIDKASEERRGSHKIGTTGRGIGPTYADKSERTGIRVLDLMDPAALRDQLAWTINNKNLILEKLYNLPPLDTEEVVKEYLGYAERLRPHVVDTSLKIYDAIQRRRNILFEGAQGTLLDLDHGTYPYVTSSNPVAGGACVGTGLGPTMIDRVIGVSKAYTTRVGEGPFPTELDGELGELLCDRGAEFGTTTGRKRRCGWFDAVIGRYAVRINGMDCMAITKLDVLDELEEIQVCIAYEIDGDRCDHFPTSARQFARCRPIYKTLPGWQVPTSECRTLEDLPQQALDYLKFLAELMEVPIAIVSLGASRDQTIIVEDPIHGPKRALLHPDGTPASLLSA.

Residues 12–18 (GDEGKGK) and 40–42 (GHT) contribute to the GTP site. The active-site Proton acceptor is aspartate 13. The Mg(2+) site is built by aspartate 13 and glycine 40. IMP is bound by residues 13 to 16 (DEGK), 38 to 41 (NAGH), threonine 128, arginine 142, glutamine 223, threonine 238, and arginine 302. The Proton donor role is filled by histidine 41. Position 298–304 (298–304 (TTTGRKR)) interacts with substrate. GTP is bound by residues arginine 304, 330 to 332 (KLD), and 412 to 414 (SLG).

This sequence belongs to the adenylosuccinate synthetase family. Homodimer. It depends on Mg(2+) as a cofactor.

It is found in the cytoplasm. The enzyme catalyses IMP + L-aspartate + GTP = N(6)-(1,2-dicarboxyethyl)-AMP + GDP + phosphate + 2 H(+). The protein operates within purine metabolism; AMP biosynthesis via de novo pathway; AMP from IMP: step 1/2. Functionally, plays an important role in the de novo pathway of purine nucleotide biosynthesis. Catalyzes the first committed step in the biosynthesis of AMP from IMP. The sequence is that of Adenylosuccinate synthetase from Trichormus variabilis (strain ATCC 29413 / PCC 7937) (Anabaena variabilis).